The following is a 338-amino-acid chain: RNA 3'-terminal phosphate cyclase (338 aa).

Residues Gln103 and 283–287 (YLADQ) each bind ATP. The Tele-AMP-histidine intermediate role is filled by His308.

Belongs to the RNA 3'-terminal cyclase family. Type 1 subfamily.

Its subcellular location is the cytoplasm. It catalyses the reaction a 3'-end 3'-phospho-ribonucleotide-RNA + ATP = a 3'-end 2',3'-cyclophospho-ribonucleotide-RNA + AMP + diphosphate. Catalyzes the conversion of 3'-phosphate to a 2',3'-cyclic phosphodiester at the end of RNA. The mechanism of action of the enzyme occurs in 3 steps: (A) adenylation of the enzyme by ATP; (B) transfer of adenylate to an RNA-N3'P to produce RNA-N3'PP5'A; (C) and attack of the adjacent 2'-hydroxyl on the 3'-phosphorus in the diester linkage to produce the cyclic end product. The biological role of this enzyme is unknown but it is likely to function in some aspects of cellular RNA processing. The sequence is that of RNA 3'-terminal phosphate cyclase from Escherichia coli O45:K1 (strain S88 / ExPEC).